Reading from the N-terminus, the 1574-residue chain is Plexin-C1 (1574 aa).

A signal peptide spans 1-34 (MEVSRRKTPPRPPYPAAPLPLIAYLLALAAPARG). The Sema domain maps to 35-452 (ADEPVWRSEQ…AGKEVRRIPV (418 aa)). Residues 35–950 (ADEPVWRSEQ…YVEQESVPST (916 aa)) are Extracellular-facing. C64 and C87 are oxidised to a cystine. N86, N143, and N149 each carry an N-linked (GlcNAc...) asparagine glycan. C156 and C194 are disulfide-bonded. An N-linked (GlcNAc...) asparagine glycan is attached at N252. A disulfide bridge links C283 with C329. N386 and N407 each carry an N-linked (GlcNAc...) asparagine glycan. 4 cysteine pairs are disulfide-bonded: C455–C472, C461–C506, C464–C481, and C475–C487. N694, N773, and N802 each carry an N-linked (GlcNAc...) asparagine glycan. The chain crosses the membrane as a helical span at residues 951–971 (WYFLIALPILLAIVIVVAVVV). Over 972–1574 (TRYKSKELSR…FDEKKKCKWM (603 aa)) the chain is Cytoplasmic. Position 984 is a phosphoserine (S984).

Belongs to the plexin family. Monomer. Homodimer. Interacts with SEMA7A. Detected on dendritic cells, skin Langerhans cells and neutrophils (at protein level).

It is found in the membrane. Its function is as follows. Receptor for SEMA7A, for vaccinia virus semaphorin A39R and for herpesvirus Sema protein. Binding of semaphorins triggers cellular responses leading to the rearrangement of the cytoskeleton and to secretion of IL6 and IL8. The polypeptide is Plexin-C1 (Plxnc1) (Mus musculus (Mouse)).